The following is a 361-amino-acid chain: Ankyrin repeat domain-containing protein 16 (361 aa).

9 ANK repeats span residues 36-66, 70-99, 103-132, 136-165, 170-200, 204-234, 238-268, 273-302, and 306-335; these read AGDTLLHCAARHGHRDVLAYLAEAWGMDIEA, DYKRPLHEAASMGHRDCVRYLLGRGAAVDC, ADWTPLMMACTRKNLGVIQELVEHGANPLL, DGWNSFHIASREGDPLILQYLLTVCPGAWK, IRRTPLHTAAMHGHLEAVKVLLKRCQYEPDY, CGVTALMDAIQCGHIDVARLLLDEHGACLSA, LGAQALHRAAVTGQDEAIRFLVSELGVDVDV, THLTALHYAAKEGHTSTIQTLLSLGADINS, and KNRSALHLACAGQHLACAKFLLQSGLKDSE.

As to quaternary structure, interacts with AARS; the interaction is direct.

The protein localises to the cytoplasm. It is found in the nucleus. Its function is as follows. Required to prevent the misactivation of serine (Ser) with tRNA(Ala) by promoting the hydrolysis of Ser-mischarged tRNA(Ala), thereby playing a role in translational fidelity. Binds directly to the catalytic domain of AARS/AlaRS and captures Ser that is misactivated by AARS/AlaRS, preventing the charging of Ser adenylates to tRNA(Ala) and precluding Ser misincorporation in nascent peptides. In Homo sapiens (Human), this protein is Ankyrin repeat domain-containing protein 16.